We begin with the raw amino-acid sequence, 100 residues long: MIPLSWYLLLSATLFSIGLIGFVIRRDLIVMLMCLEIMFNAVNIAFASFSYYNSNLTGQIFVLFSIAVAACEAVIGLAIVLALVRNTGINHSDEIVNLRG.

3 helical membrane-spanning segments follow: residues 4–24 (LSWY…GFVI), 29–49 (IVML…FASF), and 60–80 (IFVL…LAIV).

Belongs to the complex I subunit 4L family. In terms of assembly, NDH-1 is composed of 14 different subunits. Subunits NuoA, H, J, K, L, M, N constitute the membrane sector of the complex.

The protein localises to the cell inner membrane. It carries out the reaction a quinone + NADH + 5 H(+)(in) = a quinol + NAD(+) + 4 H(+)(out). Its function is as follows. NDH-1 shuttles electrons from NADH, via FMN and iron-sulfur (Fe-S) centers, to quinones in the respiratory chain. The immediate electron acceptor for the enzyme in this species is believed to be ubiquinone. Couples the redox reaction to proton translocation (for every two electrons transferred, four hydrogen ions are translocated across the cytoplasmic membrane), and thus conserves the redox energy in a proton gradient. The chain is NADH-quinone oxidoreductase subunit K from Thermodesulfovibrio yellowstonii (strain ATCC 51303 / DSM 11347 / YP87).